The following is a 986-amino-acid chain: Zinc finger protein 445 (986 aa).

The region spanning 52–134 is the SCAN box domain; sequence RQLFRQLRYH…ALLEELQRDL (83 aa). Residues 219 to 289 enclose the KRAB domain; sequence LTFQDVEVTF…NICTVQLKRD (71 aa). Glycyl lysine isopeptide (Lys-Gly) (interchain with G-Cter in SUMO2) cross-links involve residues lysine 302, lysine 360, and lysine 385. A disordered region spans residues 433–460; sequence QNTGLKENGKDRYGETSRKSWHAHPEHR. The segment covering 439-460 has biased composition (basic and acidic residues); sequence ENGKDRYGETSRKSWHAHPEHR. C2H2-type zinc fingers lie at residues 470 to 492 and 498 to 520; these read FQCRVCGKAFKWRSNRIRHEKIH and YQCSLCEKAFQRLSSYRLHQKTH. Lysine 524 participates in a covalent cross-link: Glycyl lysine isopeptide (Lys-Gly) (interchain with G-Cter in SUMO2). 2 consecutive C2H2-type zinc fingers follow at residues 553 to 575 and 581 to 604; these read LHCNQCGKNFSCKSYAIEHQRIH and YKCTRCRKTFRWKSNFSRHMKLHH. Residue lysine 609 forms a Glycyl lysine isopeptide (Lys-Gly) (interchain with G-Cter in SUMO2) linkage. 2 consecutive C2H2-type zinc fingers follow at residues 634–656 and 662–686; these read FPCQNCGKTFTQKKSLIEHQRIH and YQCSGCGETFTYRSSYIIHMKRTQH. Lysine 691 is covalently cross-linked (Glycyl lysine isopeptide (Lys-Gly) (interchain with G-Cter in SUMO2)). 4 consecutive C2H2-type zinc fingers follow at residues 718–740, 746–768, 796–818, and 824–846; these read NKCKYCGKAFHNRSFLLIHERVH, YQCRECEKAFRWSSNLYRHQRKH, FWCQECGKTFTRKRSLLDHKGIH, and FKCNLCEKSFDRNYRLVNHQRIH. Lysine 929 participates in a covalent cross-link: Glycyl lysine isopeptide (Lys-Gly) (interchain with G-Cter in SUMO2). 2 consecutive C2H2-type zinc fingers follow at residues 933–955 and 961–983; these read HKCSTCGKTFKKHSHLISHKRCH and FKCIVCGKTFRWSSNLTRHMKNH.

The protein belongs to the krueppel C2H2-type zinc-finger protein family.

It is found in the nucleus. In terms of biological role, transcription regulator required to maintain maternal and paternal gene imprinting, a process by which gene expression is restricted in a parent of origin-specific manner by epigenetic modification of genomic DNA and chromatin, including DNA methylation. Acts by controlling DNA methylation during the earliest multicellular stages of development at multiple imprinting control regions (ICRs). Acts together with ZFP57, but ZFP57 plays the predominant role in imprinting maintenance. In contrast, ZNF445 seems to be the major factor in human early embryonic imprinting maintenance. The protein is Zinc finger protein 445 (Znf445) of Mus musculus (Mouse).